Consider the following 512-residue polypeptide: cAMP-dependent protein kinase catalytic subunit (512 aa).

Residues 1–15 (MDTTAVASKGSTNVG) show a composition bias toward polar residues. Disordered regions lie at residues 1-79 (MDTT…SSLW) and 118-166 (IDNL…GLRD). Low complexity predominate over residues 16–27 (SSTDTLSTSASL). Polar residues-rich tracts occupy residues 32–52 (NAGSVNEYSEQQRHGTNSFNG) and 62–79 (SDASVSNGHNNHNESSLW). The span at 143–166 (SRDGRGELGSEHGERRSAMDGLRD) shows a compositional bias: basic and acidic residues. The 256-residue stretch at 201–456 (FNFLQTLGTG…SMDIIMHPWF (256 aa)) folds into the Protein kinase domain. Residues 207 to 215 (LGTGSFGRV) and K230 each bind ATP. D324 (proton acceptor) is an active-site residue. T356 bears the Phosphothreonine mark. The 56-residue stretch at 457–512 (RDISWDKILTRKIEVPYVPPIQAGMGDSSQFDAYADVATDYGTSEDPEFTSIFKDF) folds into the AGC-kinase C-terminal domain.

Belongs to the protein kinase superfamily. AGC Ser/Thr protein kinase family. cAMP subfamily.

It carries out the reaction L-seryl-[protein] + ATP = O-phospho-L-seryl-[protein] + ADP + H(+). It catalyses the reaction L-threonyl-[protein] + ATP = O-phospho-L-threonyl-[protein] + ADP + H(+). Activated by cAMP. This is cAMP-dependent protein kinase catalytic subunit (pka1) from Schizosaccharomyces pombe (strain 972 / ATCC 24843) (Fission yeast).